Consider the following 672-residue polypeptide: Beta-galactosidase GanA (672 aa).

Arginine 105 lines the substrate pocket. Cysteine 109 contributes to the Zn(2+) binding site. Asparagine 143 serves as a coordination point for substrate. Glutamate 144 (proton donor) is an active-site residue. Residues cysteine 149, cysteine 151, and cysteine 154 each coordinate Zn(2+). Glutamate 308 acts as the Nucleophile in catalysis. Residues tryptophan 316 and 356 to 359 each bind substrate; that span reads EKLH.

Belongs to the glycosyl hydrolase 42 family. Homotrimer.

The catalysed reaction is Hydrolysis of terminal non-reducing beta-D-galactose residues in beta-D-galactosides.. Inhibited by zinc, cobalt and copper ions. Its function is as follows. Involved in galactan degradation. Hydrolyzes galactooligosaccharides released by the endo-beta-1,4-galactanase GanB from galactan. Degrades galactotetraose, galactotriose and galactobiose, generating galactose as the end product. It is unable to use lactose. In vitro, shows maximal activity with o-nitrophenyl-beta-D-galactopyranoside (ONPG) and p-nitrophenyl-beta-D-galactopyranoside (PNPG) as substrates, trace activity with p-nitrophenyl-alpha-L-arabinopyranoside and o-nitrophenyl-beta-D-fucopyranoside as substrates, but no activity with p-nitrophenyl-alpha-D-galactopyranoside, p-nitrophenyl-beta-D-glucopyranoside, o-nitrophenyl-beta-D-xylopyranoside, p-nitrophenyl-beta-D-mannopyranoside or p-nitrophenyl-alpha-L-arabinofuranoside as substrates. This Bacillus subtilis (strain 168) protein is Beta-galactosidase GanA.